The chain runs to 295 residues: Pyridoxal 5'-phosphate synthase subunit PdxS (295 aa).

Asp-25 contacts D-ribose 5-phosphate. Lys-82 acts as the Schiff-base intermediate with D-ribose 5-phosphate in catalysis. A D-ribose 5-phosphate-binding site is contributed by Gly-154. Arg-166 is a D-glyceraldehyde 3-phosphate binding site. D-ribose 5-phosphate is bound by residues Gly-215 and 236 to 237 (GS).

The protein belongs to the PdxS/SNZ family. As to quaternary structure, in the presence of PdxT, forms a dodecamer of heterodimers.

The enzyme catalyses aldehydo-D-ribose 5-phosphate + D-glyceraldehyde 3-phosphate + L-glutamine = pyridoxal 5'-phosphate + L-glutamate + phosphate + 3 H2O + H(+). It participates in cofactor biosynthesis; pyridoxal 5'-phosphate biosynthesis. In terms of biological role, catalyzes the formation of pyridoxal 5'-phosphate from ribose 5-phosphate (RBP), glyceraldehyde 3-phosphate (G3P) and ammonia. The ammonia is provided by the PdxT subunit. Can also use ribulose 5-phosphate and dihydroxyacetone phosphate as substrates, resulting from enzyme-catalyzed isomerization of RBP and G3P, respectively. The protein is Pyridoxal 5'-phosphate synthase subunit PdxS of Staphylococcus haemolyticus (strain JCSC1435).